A 140-amino-acid chain; its full sequence is Large ribosomal subunit protein uL14 (140 aa).

It belongs to the universal ribosomal protein uL14 family. Part of the 50S ribosomal subunit. Forms a cluster with proteins L3 and L24e, part of which may contact the 16S rRNA in 2 intersubunit bridges.

Functionally, binds to 23S rRNA. Forms part of two intersubunit bridges in the 70S ribosome. The sequence is that of Large ribosomal subunit protein uL14 from Nitrosopumilus maritimus (strain SCM1).